A 97-amino-acid chain; its full sequence is Cobalt transport protein CbiN (97 aa).

Helical transmembrane passes span 6 to 26 and 68 to 88; these read VLMI…YSGL and SLLF…FFGY.

It belongs to the CbiN family. In terms of assembly, forms an energy-coupling factor (ECF) transporter complex composed of an ATP-binding protein (A component, CbiO), a transmembrane protein (T component, CbiQ) and 2 possible substrate-capture proteins (S components, CbiM and CbiN) of unknown stoichimetry.

The protein resides in the cell membrane. Its pathway is cofactor biosynthesis; adenosylcobalamin biosynthesis. In terms of biological role, part of the energy-coupling factor (ECF) transporter complex CbiMNOQ involved in cobalt import. The sequence is that of Cobalt transport protein CbiN from Methanococcus maripaludis (strain C5 / ATCC BAA-1333).